Consider the following 136-residue polypeptide: NADPH-dependent 7-cyano-7-deazaguanine reductase (136 aa).

C53 acts as the Thioimide intermediate in catalysis. D60 serves as the catalytic Proton donor. Substrate-binding positions include 75 to 77 (VEL) and 94 to 95 (HE).

It belongs to the GTP cyclohydrolase I family. QueF type 1 subfamily.

It localises to the cytoplasm. The catalysed reaction is 7-aminomethyl-7-carbaguanine + 2 NADP(+) = 7-cyano-7-deazaguanine + 2 NADPH + 3 H(+). Its pathway is tRNA modification; tRNA-queuosine biosynthesis. Its function is as follows. Catalyzes the NADPH-dependent reduction of 7-cyano-7-deazaguanine (preQ0) to 7-aminomethyl-7-deazaguanine (preQ1). This is NADPH-dependent 7-cyano-7-deazaguanine reductase from Nostoc sp. (strain PCC 7120 / SAG 25.82 / UTEX 2576).